Consider the following 176-residue polypeptide: Nucleoside triphosphate/diphosphate phosphatase (176 aa).

Arginine 23 (proton donor) is an active-site residue. Mg(2+) is bound by residues asparagine 87, aspartate 103, aspartate 105, aspartate 107, aspartate 120, and glutamate 123.

The protein belongs to the Ntdp family. The cofactor is Mg(2+).

The catalysed reaction is a ribonucleoside 5'-triphosphate + H2O = a ribonucleoside 5'-diphosphate + phosphate + H(+). It catalyses the reaction a ribonucleoside 5'-diphosphate + H2O = a ribonucleoside 5'-phosphate + phosphate + H(+). In terms of biological role, has nucleoside phosphatase activity towards nucleoside triphosphates and nucleoside diphosphates. This Lactococcus lactis subsp. cremoris (strain MG1363) protein is Nucleoside triphosphate/diphosphate phosphatase.